The sequence spans 510 residues: F-box only protein 15 (510 aa).

One can recognise an F-box domain in the interval Met-77–Ile-117.

As to quaternary structure, directly interacts with SKP1 and CUL1.

In terms of biological role, substrate-recognition component of the SCF (SKP1-CUL1-F-box protein)-type E3 ubiquitin ligase complex. The sequence is that of F-box only protein 15 (FBXO15) from Homo sapiens (Human).